A 261-amino-acid polypeptide reads, in one-letter code: CD40 ligand (261 aa).

The Cytoplasmic portion of the chain corresponds to 1 to 22 (MIETYSQPSPRSVAAGPPVSMK). A helical; Signal-anchor for type II membrane protein transmembrane segment spans residues 23 to 43 (IFMYLLTVFLITQMIGSALFA). The Extracellular segment spans residues 44 to 240 (AYLHRRLDKI…LQPGASVFVN (197 aa)). Positions 122 to 261 (IAAHVISEAS…GFTSFGLLKL (140 aa)) constitute a THD domain. A disulfide bond links C178 and C218. A glycan (N-linked (GlcNAc...) asparagine) is linked at N240.

Belongs to the tumor necrosis factor family. In terms of assembly, homotrimer. Interacts with CD28. CD40 ligand, soluble form: Exists as either a monomer or a homotrimer. Forms a ternary complex between CD40 and integrins for CD40-CD40LG signaling. The soluble form derives from the membrane form by proteolytic processing.

The protein localises to the cell membrane. Its subcellular location is the cell surface. It localises to the secreted. In terms of biological role, cytokine that acts as a ligand to CD40/TNFRSF5. Costimulates T-cell proliferation and cytokine production. Its cross-linking on T-cells generates a costimulatory signal which enhances the production of IL4 and IL10 in conjunction with the TCR/CD3 ligation and CD28 costimulation. Induces the activation of NF-kappa-B. Induces the activation of kinases MAPK8 and PAK2 in T-cells. Mediates B-cell proliferation in the absence of co-stimulus as well as IgE production in the presence of IL4. Involved in immunoglobulin class switching. Functionally, acts as a ligand for integrins, specifically ITGA5:ITGB1 and ITGAV:ITGB3; both integrins and the CD40 receptor are required for activation of CD40-CD40LG signaling, which have cell-type dependent effects, such as B-cell activation, NF-kappa-B signaling and anti-apoptotic signaling. The protein is CD40 ligand (CD40LG) of Sus scrofa (Pig).